Here is a 365-residue protein sequence, read N- to C-terminus: Flagellar P-ring protein (365 aa).

A signal peptide spans 1–19; that stretch reads MIKFLSALILLLVTTAAQA.

This sequence belongs to the FlgI family. As to quaternary structure, the basal body constitutes a major portion of the flagellar organelle and consists of four rings (L,P,S, and M) mounted on a central rod.

It is found in the periplasm. Its subcellular location is the bacterial flagellum basal body. Its function is as follows. Assembles around the rod to form the L-ring and probably protects the motor/basal body from shearing forces during rotation. This is Flagellar P-ring protein from Shigella dysenteriae serotype 1 (strain Sd197).